Reading from the N-terminus, the 1142-residue chain is DNA-directed RNA polymerase subunit beta N-terminal section (1142 aa).

The protein belongs to the RNA polymerase beta chain family. In terms of assembly, in plastids the minimal PEP RNA polymerase catalytic core is composed of four subunits: alpha, beta, beta', and beta''. When a (nuclear-encoded) sigma factor is associated with the core the holoenzyme is formed, which can initiate transcription.

The protein resides in the plastid. It is found in the chloroplast. The enzyme catalyses RNA(n) + a ribonucleoside 5'-triphosphate = RNA(n+1) + diphosphate. In terms of biological role, DNA-dependent RNA polymerase catalyzes the transcription of DNA into RNA using the four ribonucleoside triphosphates as substrates. The sequence is that of DNA-directed RNA polymerase subunit beta N-terminal section (rpoB1) from Pleurastrum terricola (Filamentous green alga).